The following is a 218-amino-acid chain: Major NAD(P)H-flavin oxidoreductase (218 aa).

FMN is bound by residues 12 to 16 and Asn-73; that span reads RYTSK. Residue 154–159 participates in NAD(+) binding; that stretch reads LARLNI. Residues 165-166 and 206-208 contribute to the FMN site; these read EG and KSR.

The protein belongs to the nitroreductase family. As to quaternary structure, homodimer. It depends on FMN as a cofactor.

Its function is as follows. Involved in bioluminescence. It is a good supplier of reduced flavin mononucleotide (FMNH2) to the bioluminescence reaction. Major FMN reductase. It is capable of using both NADH and NADPH as electron donors. As electron acceptor, FMN is the most effective, FAD is considerably effective, and riboflavin is the least effective. This Aliivibrio fischeri (Vibrio fischeri) protein is Major NAD(P)H-flavin oxidoreductase.